The primary structure comprises 170 residues: Adenine phosphoribosyltransferase (170 aa).

This sequence belongs to the purine/pyrimidine phosphoribosyltransferase family. Homodimer.

It localises to the cytoplasm. It catalyses the reaction AMP + diphosphate = 5-phospho-alpha-D-ribose 1-diphosphate + adenine. Its pathway is purine metabolism; AMP biosynthesis via salvage pathway; AMP from adenine: step 1/1. Functionally, catalyzes a salvage reaction resulting in the formation of AMP, that is energically less costly than de novo synthesis. The protein is Adenine phosphoribosyltransferase of Lactococcus lactis subsp. cremoris (strain MG1363).